The chain runs to 285 residues: Chromatin modification-related protein YNG2 (285 aa).

2 disordered regions span residues 1-24 and 155-201; these read MSFERPQDPSSALEQATQDVSNLK and RTVA…GANF. Over residues 8–24 the composition is skewed to polar residues; sequence DPSSALEQATQDVSNLK. Residues 10–36 adopt a coiled-coil conformation; it reads SSALEQATQDVSNLKSESRFLLEEIRA. The segment at 224–273 adopts a PHD-type zinc-finger fold; sequence QLYCFCQSVSYGEMVACDGPNCKYEWFHYGCVNLDEPPKGQWYCPECRQE. Positions 227, 229, 240, 245, 251, 254, 267, and 270 each coordinate Zn(2+).

The protein belongs to the ING family. Interacts with H3K4me3 and to a lesser extent with H3K4me2. Component of the NuA4 histone acetyltransferase complex.

The protein localises to the nucleus. Component of the NuA4 histone acetyltransferase complex which is involved in transcriptional activation of selected genes principally by acetylation of nucleosomal histone H4 and H2A. The NuA4 complex is also involved in DNA repair. Involved in cell cycle progression and meiosis. In Eremothecium gossypii (strain ATCC 10895 / CBS 109.51 / FGSC 9923 / NRRL Y-1056) (Yeast), this protein is Chromatin modification-related protein YNG2 (YNG2).